We begin with the raw amino-acid sequence, 213 residues long: Validoxylamine A 7'-phosphate phosphatase (213 aa).

Asp8 acts as the Nucleophile in catalysis. Residues Asp8 and Asp10 each coordinate a divalent metal cation. Residues 8–10 (DLD), 107–108 (TS), and Lys140 contribute to the substrate site. The Proton donor role is filled by Asp10. Position 165 (Asp165) interacts with a divalent metal cation.

The protein belongs to the HAD-like hydrolase superfamily. CbbY/CbbZ/Gph/YieH family. Mg(2+) is required as a cofactor. Mn(2+) serves as cofactor. Requires Co(2+) as cofactor.

The catalysed reaction is validoxylamine A 7'-phosphate + H2O = validoxylamine A + phosphate. In terms of biological role, involved in the biosynthesis of the antifungal agent validamycin A. Catalyzes the dephosphorylation of validoxylamine A 7'-phosphate to yield validoxylamine A. VldH is also able to convert trehalose 6-phosphate to trehalose. The protein is Validoxylamine A 7'-phosphate phosphatase of Streptomyces hygroscopicus subsp. limoneus.